Here is a 61-residue protein sequence, read N- to C-terminus: Small ribosomal subunit protein uS14 (61 aa).

4 residues coordinate Zn(2+): Cys-24, Cys-27, Cys-40, and Cys-43.

The protein belongs to the universal ribosomal protein uS14 family. Zinc-binding uS14 subfamily. In terms of assembly, part of the 30S ribosomal subunit. Contacts proteins S3 and S10. The cofactor is Zn(2+).

In terms of biological role, binds 16S rRNA, required for the assembly of 30S particles and may also be responsible for determining the conformation of the 16S rRNA at the A site. In Streptococcus thermophilus (strain CNRZ 1066), this protein is Small ribosomal subunit protein uS14.